The primary structure comprises 369 residues: MAGYLPEPLRMMVTNPAISDFTSDGPLPYALRQKFTGWPPPPAAADISLASQTVLVTGATSGVGLEAARQLAQLGPRLLILGARNLSKADGVKRQLEQDTPHVAVQVAKLDLEDLSSVDRFVDGLHASAIHLDLALLNAGFFANDDRMTPDGYSSLFQVNFLSTAYLAFRLLPLLQTTTTAPEASPQGPRLVLVTSEAHAWTTFPVPPEPAENSLPILSSFRQKESLGSADDQYYRAKLLLALIGKELSRRLTTMQMATSVVITTPGFCASNFFPDSVMTRLIQLISARSIQQGGALHVFAATAQGPQMHGAYLRDGKPTGLSKFAEGPQGQILQQRLWVEMEQFLAGRGYLLSSILKPSSPLQIDGPV.

Residues Lys88, Asp111, Asn138, Tyr234, and Lys238 each contribute to the NADP(+) site. The active-site Proton donor is Tyr234. Lys238 serves as the catalytic Lowers pKa of active site Tyr.

It belongs to the short-chain dehydrogenases/reductases (SDR) family.

It functions in the pathway antifungal biosynthesis. Functionally, short chain dehydrogenase; part of the gene cluster that mediates the biosynthesis of the tetrahydropyranyl antifungal agent restricticin that acts as an inhibitor of CYP51 and blocks the ergosterol biosynthesis. The highly reducing polyketide synthase rstn3, the short chain dehydrogenase rstn4, the cyclase rstn5, the FAD-dependent monooxygenase rstn6 and the enoylreductase rstn7 are required to generate the first stable intermediate desmethylrestrictinol. Rstn3 with rstn7 biosynthesize the first polyketide chain intermediate that is reduced by rstn4, followed by epoxidation by rstn6 before 6-endo cyclization via epoxide opening by rstn5 leads to desmethylrestrictinol. The methyltransferase rstn1 then catalyzes the C4 O-methylation of desmethylrestrictinol to produce restrictinol, and the nonribosomal peptide synthetase rstn8 catalyzes the C3 esterification of restrictinol with glycine that leads to restricticin. The sequence is that of Short chain dehydrogenase rstn4 from Aspergillus nomiae NRRL (strain ATCC 15546 / NRRL 13137 / CBS 260.88 / M93).